A 262-amino-acid chain; its full sequence is Phosphonates import ATP-binding protein PhnC (262 aa).

One can recognise an ABC transporter domain in the interval 5–253; it reads IRVEKLAKTF…RFDHLYRSIN (249 aa). 37 to 44 is a binding site for ATP; that stretch reads GPSGSGKS.

It belongs to the ABC transporter superfamily. Phosphonates importer (TC 3.A.1.9.1) family. The complex is composed of two ATP-binding proteins (PhnC), two transmembrane proteins (PhnE) and a solute-binding protein (PhnD).

It is found in the cell inner membrane. It carries out the reaction phosphonate(out) + ATP + H2O = phosphonate(in) + ADP + phosphate + H(+). Functionally, part of the ABC transporter complex PhnCDE involved in phosphonates, phosphate esters, phosphite and phosphate import. Responsible for energy coupling to the transport system. The protein is Phosphonates import ATP-binding protein PhnC of Escherichia coli (strain K12).